A 216-amino-acid chain; its full sequence is Large ribosomal subunit protein uL3 (216 aa).

The disordered stretch occupies residues Arg134 to Gln153. N5-methylglutamine is present on Gln153.

This sequence belongs to the universal ribosomal protein uL3 family. As to quaternary structure, part of the 50S ribosomal subunit. Forms a cluster with proteins L14 and L19. In terms of processing, methylated by PrmB.

One of the primary rRNA binding proteins, it binds directly near the 3'-end of the 23S rRNA, where it nucleates assembly of the 50S subunit. This chain is Large ribosomal subunit protein uL3, found in Cupriavidus pinatubonensis (strain JMP 134 / LMG 1197) (Cupriavidus necator (strain JMP 134)).